A 304-amino-acid polypeptide reads, in one-letter code: MTASLHIILDTDPGIDDAAAIAAALFAPQLDLQLITTVAGNVSVEKTTRNALQLLHFWNSDIPLAQGAATPLLRPLRDAAYVHGESGMEGYDFVDHQRQPLAKPAFISIRDVLMNAPEPMTLVAIGPLTNIALLLMHYPECACNIRRLVLMGGSAGRGNFTPNAEFNIAVDPEAAAHVFRSGIEIVMCGLDVTNQAMLSPDFLNKLPALNRTGKMLHSLFNHYRSGSMRTGVRMHDLCAIAWLVRPELFTLQSCFVAVETQGEYTAGTTVVDIEGRLGQPANAQMALDVDGFRQWVAEVFAYAP.

H235 is an active-site residue.

This sequence belongs to the IUNH family. RihC subfamily.

Functionally, hydrolyzes both purine and pyrimidine ribonucleosides with a broad-substrate specificity. In Salmonella paratyphi A (strain ATCC 9150 / SARB42), this protein is Non-specific ribonucleoside hydrolase RihC.